A 728-amino-acid polypeptide reads, in one-letter code: tRNA (guanine(27)-N(2))-dimethyltransferase (728 aa).

The segment covering 1–10 has biased composition (acidic residues); the sequence is MENMAEEELL. Disordered regions lie at residues 1–78 and 98–118; these read MENM…SKRH and DVDS…SQTC. Thr-23 carries the post-translational modification Phosphothreonine. The segment covering 23–33 has biased composition (pro residues); that stretch reads TPAPDSAPVPA. Positions 34-46 are enriched in low complexity; the sequence is PAADTALDSAPTP. Over residues 47–61 the composition is skewed to pro residues; the sequence is DSDPAPALAPAPAPA. Ser-63 carries the phosphoserine modification. The segment covering 101–118 has biased composition (polar residues); it reads SASSLNSDNPGTENSQTC. Residues 132 to 136 carry the Nucleolar localization signal motif; the sequence is HKLRR. The C2H2-type zinc-finger motif lies at 181-203; the sequence is YHCIICSATITRRTDMLGHVKRH. In terms of domain architecture, Trm1 methyltransferase spans 224 to 683; the sequence is EILKETDTDI…APLMQFKSIL (460 aa). Residues Arg-257, Asp-304, Asp-352, and Ala-353 each contribute to the S-adenosyl-L-methionine site. Residues Cys-483, Cys-486, Cys-508, and Cys-510 each contribute to the Zn(2+) site. Residue Lys-580 forms a Glycyl lysine isopeptide (Lys-Gly) (interchain with G-Cter in SUMO2) linkage. The residue at position 607 (Ser-607) is a Phosphoserine. Residues 693 to 728 are disordered; the sequence is GAQSEGQMPPAAEDTVTDRVEMSVSDKAEASGCRRW. The span at 708-721 shows a compositional bias: basic and acidic residues; the sequence is VTDRVEMSVSDKAE.

Belongs to the class I-like SAM-binding methyltransferase superfamily. Trm1 family. In terms of tissue distribution, expressed in various neuronal structures during embryonic development, including spinal ganglia, trigeminal nerve and ganglion, olfactory and nasopharyngeal epithelium, nuclei of the metencephalon, thalamus and medulla oblongata. Also expressed in lung, esophagus, epiglottis, ependyma, vertebral column, spinal cord and brown adipose tissue. Expression persists in the adult brain with dynamically changing patterns in cortex and cerebellum.

The protein localises to the nucleus. It localises to the nucleolus. It carries out the reaction guanosine(27) in tRNA(Tyr) + 2 S-adenosyl-L-methionine = N(2)-dimethylguanosine(27) in tRNA(Tyr) + 2 S-adenosyl-L-homocysteine + 2 H(+). Specifically dimethylates a single guanine residue at position 27 of tRNA(Tyr) using S-adenosyl-L-methionine as donor of the methyl groups. Dimethylation at position 27 of tRNA(Tyr) is required for efficient translation of tyrosine codons. Also required to maintain 3-(3-amino-3-carboxypropyl)uridine (acp3U) in the D-loop of several cytoplasmic tRNAs. May play a role in motor coordination and exploratory behavior. This chain is tRNA (guanine(27)-N(2))-dimethyltransferase, found in Mus musculus (Mouse).